Here is a 694-residue protein sequence, read N- to C-terminus: Transcriptional activator HAA1 (694 aa).

The copper-fist DNA-binding region spans 1–40; the sequence is MVLINGIKYACERCIRGHRVTTCNHTDQPLMMIKPKGRPS. Cys11, Cys14, Cys23, and His25 together coordinate Zn(2+). 2 disordered regions span residues 104-128 and 209-240; these read QKRHLRKSPSSSQKKGRSISRSQPM and FNFLTGNINETNQNHSNHQHSKSGNNWQDSSV. Residues 111–126 show a composition bias toward polar residues; it reads SPSSSQKKGRSISRSQ. Ser125, Ser231, Ser241, and Ser291 each carry phosphoserine. Disordered regions lie at residues 332-388, 479-514, 566-588, and 650-677; these read FDIN…NGLF, EKERETERSPSSNYITDRPFTRKPRSSSIDVNHRYP, SSIHSVPQSINSPRMPKTGSRQD, and MISTPSGRNDLPDTSPMSSIQTASPPSQ. Residues 336 to 349 are compositionally biased toward polar residues; that stretch reads DNCNRINSKSYSKT. Positions 350–378 are enriched in low complexity; sequence NSMNGNGMNNSNNNNINSNGNDKNNNNSS. Polar residues-rich tracts occupy residues 566 to 577 and 664 to 677; these read SSIHSVPQSINS and SPMSSIQTASPPSQ.

It localises to the nucleus. Its function is as follows. Regulates the transcription of a set of genes, many of which encode membrane proteins. Among the genes regulated are YGR138C and YRO2. Does not seem to be dependent on copper. The sequence is that of Transcriptional activator HAA1 (HAA1) from Saccharomyces cerevisiae (strain ATCC 204508 / S288c) (Baker's yeast).